The chain runs to 252 residues: Geranylgeranylglyceryl phosphate synthase (252 aa).

Residues aspartate 26 and serine 55 each coordinate Mg(2+). Residues 174-180 (YLEAGSG), 205-206 (GG), and 227-228 (GT) contribute to the sn-glycerol 1-phosphate site.

Belongs to the GGGP/HepGP synthase family. Group II subfamily. Homotetramer. Homohexamer. Mg(2+) serves as cofactor.

The protein resides in the cytoplasm. It catalyses the reaction sn-glycerol 1-phosphate + (2E,6E,10E)-geranylgeranyl diphosphate = sn-3-O-(geranylgeranyl)glycerol 1-phosphate + diphosphate. It participates in membrane lipid metabolism; glycerophospholipid metabolism. Its function is as follows. Prenyltransferase that catalyzes the transfer of the geranylgeranyl moiety of geranylgeranyl diphosphate (GGPP) to the C3 hydroxyl of sn-glycerol-1-phosphate (G1P). This reaction is the first ether-bond-formation step in the biosynthesis of archaeal membrane lipids. This chain is Geranylgeranylglyceryl phosphate synthase, found in Thermococcus kodakarensis (strain ATCC BAA-918 / JCM 12380 / KOD1) (Pyrococcus kodakaraensis (strain KOD1)).